The following is an 89-amino-acid chain: Small ribosomal subunit protein uS19 (89 aa).

The protein belongs to the universal ribosomal protein uS19 family.

Functionally, protein S19 forms a complex with S13 that binds strongly to the 16S ribosomal RNA. This is Small ribosomal subunit protein uS19 from Vesicomyosocius okutanii subsp. Calyptogena okutanii (strain HA).